The primary structure comprises 878 residues: Aconitate hydratase A (878 aa).

The [4Fe-4S] cluster site is built by Cys426, Cys492, and Cys495.

It belongs to the aconitase/IPM isomerase family. As to quaternary structure, monomer. It depends on [4Fe-4S] cluster as a cofactor.

The enzyme catalyses citrate = D-threo-isocitrate. It catalyses the reaction (2S,3R)-3-hydroxybutane-1,2,3-tricarboxylate = 2-methyl-cis-aconitate + H2O. It participates in carbohydrate metabolism; tricarboxylic acid cycle; isocitrate from oxaloacetate: step 2/2. Its pathway is organic acid metabolism; propanoate degradation. Involved in the catabolism of short chain fatty acids (SCFA) via the tricarboxylic acid (TCA)(acetyl degradation route) and probably the 2-methylcitrate cycle I (propionate degradation route). Catalyzes the reversible isomerization of citrate to isocitrate via cis-aconitate. Could catalyze the hydration of 2-methyl-cis-aconitate to yield (2R,3S)-2-methylisocitrate. The apo form of AcnA functions as a RNA-binding regulatory protein. The sequence is that of Aconitate hydratase A (acnA) from Rickettsia prowazekii (strain Madrid E).